The sequence spans 400 residues: E3 ubiquitin-protein ligase RNF149 (400 aa).

Residues 1–32 (MAWRRREASVGARGVLALALLALALCVPGARG) form the signal peptide. N-linked (GlcNAc...) asparagine glycosylation is found at Asn52 and Asn145. Residues 67–175 (SSPKEGAHGL…PKGREILELV (109 aa)) form the PA domain. Residues 201 to 221 (VVFVAIAFITMMIISLAWLIF) form a helical membrane-spanning segment. The segment at 269 to 310 (CAVCIENFKVKDIIRILPCKHIFHRICIDPWLLDHRTCPMCK) adopts an RING-type; atypical zinc-finger fold. The interval 325-400 (DVQEMPAPES…SDSRHGGPIS (76 aa)) is disordered. Residue Ser345 is modified to Phosphoserine. The segment covering 356-368 (DSSPPSASPAESE) has biased composition (low complexity). Over residues 389–400 (GRSDSRHGGPIS) the composition is skewed to basic and acidic residues.

It localises to the membrane. The enzyme catalyses S-ubiquitinyl-[E2 ubiquitin-conjugating enzyme]-L-cysteine + [acceptor protein]-L-lysine = [E2 ubiquitin-conjugating enzyme]-L-cysteine + N(6)-ubiquitinyl-[acceptor protein]-L-lysine.. The protein operates within protein modification; protein ubiquitination. Its function is as follows. E3 ubiquitin-protein ligase. Ubiquitinates BRAF, inducing its proteasomal degradation. In Homo sapiens (Human), this protein is E3 ubiquitin-protein ligase RNF149 (RNF149).